The sequence spans 129 residues: Serum amyloid A protein (129 aa).

A signal peptide spans 1 to 18; sequence MKLFPGLLFCSLVLGVSG. Q19 bears the Pyrrolidone carboxylic acid mark. Residues 92 to 129 are disordered; the sequence is GDSGHGAEDSKADQAANEWGRSGKDPNHFRPAGLPDKY. The propeptide at 112-129 is often cleaved during amyloidogenesis; sequence RSGKDPNHFRPAGLPDKY.

It belongs to the SAA family. This protein is the precursor of amyloid protein A, which is formed by the removal of residues from the C-terminal end. In terms of tissue distribution, expressed by the liver; secreted in plasma.

Its subcellular location is the secreted. Major acute phase reactant. Apolipoprotein of the HDL complex. This Canis lupus familiaris (Dog) protein is Serum amyloid A protein (SAA1).